The chain runs to 273 residues: 2,3,4,5-tetrahydropyridine-2,6-dicarboxylate N-succinyltransferase (273 aa).

Substrate is bound by residues R104 and D141.

It belongs to the transferase hexapeptide repeat family. In terms of assembly, homotrimer.

It is found in the cytoplasm. The catalysed reaction is (S)-2,3,4,5-tetrahydrodipicolinate + succinyl-CoA + H2O = (S)-2-succinylamino-6-oxoheptanedioate + CoA. It participates in amino-acid biosynthesis; L-lysine biosynthesis via DAP pathway; LL-2,6-diaminopimelate from (S)-tetrahydrodipicolinate (succinylase route): step 1/3. In Neisseria gonorrhoeae (strain ATCC 700825 / FA 1090), this protein is 2,3,4,5-tetrahydropyridine-2,6-dicarboxylate N-succinyltransferase.